Reading from the N-terminus, the 497-residue chain is Subtilisin-like protease CPC735_031240 (497 aa).

The N-terminal stretch at 1–16 (MKGVLSLSLLPLLAAP) is a signal peptide. The propeptide occupies 17 to 136 (SPILVDTIHR…IEKDSEVHAW (120 aa)). In terms of domain architecture, Inhibitor I9 spans 43–134 (SYIVVFKKNV…QYIEKDSEVH (92 aa)). The 307-residue stretch at 146–452 (PWGLARVSHR…GGSSNYTAII (307 aa)) folds into the Peptidase S8 domain. Catalysis depends on charge relay system residues Asp-182 and His-214. N-linked (GlcNAc...) asparagine glycans are attached at residues Asn-244 and Asn-284. Ser-380 serves as the catalytic Charge relay system. The N-linked (GlcNAc...) asparagine glycan is linked to Asn-447.

This sequence belongs to the peptidase S8 family.

It is found in the secreted. Secreted subtilisin-like serine protease with keratinolytic activity that contributes to pathogenicity. The protein is Subtilisin-like protease CPC735_031240 of Coccidioides posadasii (strain C735) (Valley fever fungus).